The following is a 229-amino-acid chain: Ribosome maturation factor RimM (229 aa).

Residues 1 to 21 (MAGHDSGNAKRGRSPSFGVFV) are disordered. Residues 148 to 229 (ADEFYWVDLI…RVVVDWEADY (82 aa)) enclose the PRC barrel domain.

Belongs to the RimM family. In terms of assembly, binds ribosomal protein uS19.

The protein localises to the cytoplasm. An accessory protein needed during the final step in the assembly of 30S ribosomal subunit, possibly for assembly of the head region. Essential for efficient processing of 16S rRNA. May be needed both before and after RbfA during the maturation of 16S rRNA. It has affinity for free ribosomal 30S subunits but not for 70S ribosomes. This chain is Ribosome maturation factor RimM, found in Burkholderia pseudomallei (strain 1106a).